We begin with the raw amino-acid sequence, 251 residues long: Small ribosomal subunit protein uS2 (251 aa).

It belongs to the universal ribosomal protein uS2 family.

This chain is Small ribosomal subunit protein uS2, found in Aromatoleum aromaticum (strain DSM 19018 / LMG 30748 / EbN1) (Azoarcus sp. (strain EbN1)).